Consider the following 486-residue polypeptide: Deleted in azoospermia protein 3 (486 aa).

Over residues 1 to 10 (MSAANPETPN) the composition is skewed to polar residues. The interval 1–27 (MSAANPETPNSTISREASTQSSSAAAS) is disordered. Residues 11–27 (STISREASTQSSSAAAS) show a composition bias toward low complexity. The RRM domain maps to 40–115 (NTVFVGGIDA…KKLKLGPAIR (76 aa)). DAZ domains are found at residues 167 to 190 (AYSA…YNYQ), 191 to 214 (EYPT…YNYQ), 215 to 238 (PFPA…YNYQ), 239 to 262 (AFPA…YNYQ), 263 to 286 (PFPA…YNYQ), 287 to 310 (AFPA…YNYQ), 311 to 334 (AFPA…YNYQ), 335 to 358 (AFPA…YNYQ), 359 to 382 (AFPA…YNYQ), 383 to 406 (AFPA…YNYQ), 407 to 430 (AFPA…YNYQ), and 431 to 454 (AFPA…YNYQ).

It belongs to the RRM DAZ family. As to quaternary structure, forms a heterodimer with BOLL and DAZL. Interacts with PUM2, DAZAP1, DAZAP2, DZIP1 and DZIP3. In terms of tissue distribution, testis specific.

The protein resides in the cytoplasm. The protein localises to the nucleus. In terms of biological role, RNA-binding protein that plays an essential role in spermatogenesis. May act by binding to the 3'-UTR of mRNAs and regulating their translation. The protein is Deleted in azoospermia protein 3 (DAZ3) of Homo sapiens (Human).